A 137-amino-acid polypeptide reads, in one-letter code: L-ectoine synthase (137 aa).

Residues 118–137 (VHREDGSYAPADEADDQKPL) are disordered.

Belongs to the ectoine synthase family.

The catalysed reaction is (2S)-4-acetamido-2-aminobutanoate = L-ectoine + H2O. It functions in the pathway amine and polyamine biosynthesis; ectoine biosynthesis; L-ectoine from L-aspartate 4-semialdehyde: step 3/3. With respect to regulation, seems to require potassium ions for its activity and stability. Slightly inhibited by N-ethylmaleimide. Its function is as follows. Catalyzes the circularization of gamma-N-acetyl-alpha,gamma-diaminobutyric acid (ADABA) to ectoine (1,4,5,6-tetrahydro-2-methyl-4-pyrimidine carboxylic acid), which is an excellent osmoprotectant. Does not act on N-acetylated amino acids like N-alpha-acetyl-L-asparagine,N-alpha-acetyl-L-ornithine, N-alpha-acetyl-L-lysine and N-epsilon-acetyl-L-lysine. The polypeptide is L-ectoine synthase (ectC) (Halomonas elongata (strain ATCC 33173 / DSM 2581 / NBRC 15536 / NCIMB 2198 / 1H9)).